A 242-amino-acid chain; its full sequence is Immunity protein TsiV2 (242 aa).

3 consecutive transmembrane segments (helical) span residues 39–59 (VFGA…FADI), 66–86 (FWGF…LFMP), and 118–138 (FAWV…PLAF).

It is found in the host membrane. Functionally, immunity protein that plays a role in preventing early activation of toxin VasX. This chain is Immunity protein TsiV2, found in Vibrio cholerae serotype O1 (strain ATCC 39315 / El Tor Inaba N16961).